The following is a 320-amino-acid chain: ATP-dependent 6-phosphofructokinase (320 aa).

Glycine 12 lines the ATP pocket. Residue 22-26 (RSVIR) participates in ADP binding. Residues 73–74 (RF) and 103–106 (GDGS) contribute to the ATP site. Residue aspartate 104 coordinates Mg(2+). 126–128 (TID) provides a ligand contact to substrate. The active-site Proton acceptor is aspartate 128. Arginine 155 is a binding site for ADP. Residues arginine 163 and 170–172 (MGR) contribute to the substrate site. ADP contacts are provided by residues 186–188 (GAE) and 214–216 (KRH). Substrate-binding positions include glutamate 223, arginine 244, and 250-253 (HIQR).

This sequence belongs to the phosphofructokinase type A (PFKA) family. ATP-dependent PFK group I subfamily. Prokaryotic clade 'B1' sub-subfamily. In terms of assembly, homotetramer. Mg(2+) serves as cofactor.

The protein localises to the cytoplasm. The enzyme catalyses beta-D-fructose 6-phosphate + ATP = beta-D-fructose 1,6-bisphosphate + ADP + H(+). It participates in carbohydrate degradation; glycolysis; D-glyceraldehyde 3-phosphate and glycerone phosphate from D-glucose: step 3/4. Allosterically activated by ADP and other diphosphonucleosides, and allosterically inhibited by phosphoenolpyruvate. Functionally, catalyzes the phosphorylation of D-fructose 6-phosphate to fructose 1,6-bisphosphate by ATP, the first committing step of glycolysis. This is ATP-dependent 6-phosphofructokinase from Tolumonas auensis (strain DSM 9187 / NBRC 110442 / TA 4).